A 155-amino-acid polypeptide reads, in one-letter code: Aspartate carbamoyltransferase regulatory chain (155 aa).

4 residues coordinate Zn(2+): Cys-112, Cys-117, Cys-140, and Cys-143.

Belongs to the PyrI family. As to quaternary structure, contains catalytic and regulatory chains. It depends on Zn(2+) as a cofactor.

In terms of biological role, involved in allosteric regulation of aspartate carbamoyltransferase. This Phocaeicola vulgatus (strain ATCC 8482 / DSM 1447 / JCM 5826 / CCUG 4940 / NBRC 14291 / NCTC 11154) (Bacteroides vulgatus) protein is Aspartate carbamoyltransferase regulatory chain.